Reading from the N-terminus, the 86-residue chain is U-actitoxin-Avd10a (86 aa).

A signal peptide spans 1 to 20 (MSRIAILLFVAFLLVAGISA). Residues 21 to 42 (KSTAHFKKNVLADLFKERRFNA) constitute a propeptide that is removed on maturation. Positions 51 to 86 (CVNIDVDSFCDGMAERGACNIIPQMATNCAKACNSC) constitute a ShKT domain. Intrachain disulfides connect C51–C86, C60–C79, and C69–C83.

Belongs to the sea anemone type 1 potassium channel toxin family. Type 1b subfamily.

It localises to the secreted. The protein localises to the nematocyst. In terms of biological role, inhibits voltage-gated potassium channels (Kv1/KCNA). This chain is U-actitoxin-Avd10a, found in Anemonia viridis (Snakelocks anemone).